The sequence spans 573 residues: MRASQLLISTLKETPADADIVSHQLMLRAGMIRRLSSGLYTWLPLGLRTLRKVENIVREEMNRAGAQEVLMPSIQPAELWQESGRWDQYGNLLLRIRDRHERDFCYGPTHEEVITDLVRNEIRSYKQLPSNFYQIQTKFRDETRPRFGVMRAREFIMKDAYSFDIDQAGLQRSYDAMYDAYMRIFTRLGLDFRAVEADNGDIGGSGSHEFQVLADSGEDAVIFSTGSDYAANIEKAEALPAPLGETPERPAPQEELRLVDTPNARTIATLVEQHGLPIEKTIKTLMVHGSEGGLVALLVRGDHELNEVKAENLPEVAAPLTMASEEEIRAAVGAGPGSLGPVNLDMPLIIDRSVALMSDFGAGANIDGQHYFGINWERDVALPKVADLRNVVEGDPSPDGKGTLSIARGIEVGHVFQLGTKYSTAMNATVLDDNGQAVPLLMGCYGIGVTRVVAAAIEQNHDAGGIIWPDAIAPFEIALVPMNAHKSERVREYADTLYQQLSDAGFDVLIDDRDLRPGVKFADQELIGIPHRVVIGDRGLDNDELEYKGRRDSDVTMVPTEGLLSFLRERITK.

The protein belongs to the class-II aminoacyl-tRNA synthetase family. ProS type 1 subfamily. In terms of assembly, homodimer.

It localises to the cytoplasm. It carries out the reaction tRNA(Pro) + L-proline + ATP = L-prolyl-tRNA(Pro) + AMP + diphosphate. In terms of biological role, catalyzes the attachment of proline to tRNA(Pro) in a two-step reaction: proline is first activated by ATP to form Pro-AMP and then transferred to the acceptor end of tRNA(Pro). As ProRS can inadvertently accommodate and process non-cognate amino acids such as alanine and cysteine, to avoid such errors it has two additional distinct editing activities against alanine. One activity is designated as 'pretransfer' editing and involves the tRNA(Pro)-independent hydrolysis of activated Ala-AMP. The other activity is designated 'posttransfer' editing and involves deacylation of mischarged Ala-tRNA(Pro). The misacylated Cys-tRNA(Pro) is not edited by ProRS. This is Proline--tRNA ligase from Chromohalobacter salexigens (strain ATCC BAA-138 / DSM 3043 / CIP 106854 / NCIMB 13768 / 1H11).